The sequence spans 815 residues: DNA topoisomerase 1 (815 aa).

The region spanning 3 to 119 (KHLLIVESPA…QRIVFTEITP (117 aa)) is the Toprim domain. Residues E9 and D82 each coordinate Mg(2+). The 441-residue stretch at 133-573 (ASDLVDAQQA…KFWVPFKELV (441 aa)) folds into the Topo IA-type catalytic domain. Positions 167-172 (SAGRVQ) are interaction with DNA. The active-site O-(5'-phospho-DNA)-tyrosine intermediate is the Y308. The segment at 760–815 (GKPARKNFSTKKTATKNETRKQTTKKRTTDAKATKKVSDKPVKKQIKKRIAPNITE) is disordered. Residues 774–801 (TKNETRKQTTKKRTTDAKATKKVSDKPV) show a composition bias toward basic and acidic residues.

This sequence belongs to the type IA topoisomerase family. In terms of assembly, monomer. Mg(2+) is required as a cofactor.

The catalysed reaction is ATP-independent breakage of single-stranded DNA, followed by passage and rejoining.. In terms of biological role, releases the supercoiling and torsional tension of DNA, which is introduced during the DNA replication and transcription, by transiently cleaving and rejoining one strand of the DNA duplex. Introduces a single-strand break via transesterification at a target site in duplex DNA. The scissile phosphodiester is attacked by the catalytic tyrosine of the enzyme, resulting in the formation of a DNA-(5'-phosphotyrosyl)-enzyme intermediate and the expulsion of a 3'-OH DNA strand. The free DNA strand then undergoes passage around the unbroken strand, thus removing DNA supercoils. Finally, in the religation step, the DNA 3'-OH attacks the covalent intermediate to expel the active-site tyrosine and restore the DNA phosphodiester backbone. This chain is DNA topoisomerase 1, found in Xylella fastidiosa (strain 9a5c).